The primary structure comprises 377 residues: Guanine nucleotide-binding protein subunit beta-1 (377 aa).

WD repeat units lie at residues 63-93, 105-135, 154-185, 202-233, 246-276, 293-323, and 339-369; these read GHTGKVYSLDWTPEKNRIVSASQDGRLIVWN, LPCAWVMTCAFSPSGQSVACGGLDSVCSIFN, GHKGYVSSCQYVPDEDTHLITSSGDQTCVLWD, GHTADVQSVSISSSNPRLFVSGSCDTTARLWD, GHEGDVNTVKFFPDGNRFGTGSEDGTCRLFD, GDIPHVTSMAFSISGRLLFVGYSNGDCYVWD, and SHEGRISCLGLSADGSALCTGSWDTNLKIWA.

It belongs to the WD repeat G protein beta family. In terms of assembly, g proteins are composed of 3 units, alpha, beta and gamma.

Functionally, guanine nucleotide-binding proteins (G proteins) are involved as a modulator or transducer in various transmembrane signaling systems. The beta and gamma chains are required for the GTPase activity, for replacement of GDP by GTP, and for G protein-effector interaction. This Nicotiana tabacum (Common tobacco) protein is Guanine nucleotide-binding protein subunit beta-1.